The chain runs to 238 residues: Snake venom metalloproteinase HF-1 (238 aa).

One can recognise a Peptidase M12B domain in the interval 17-221 (RYIQLVVVAD…YNPQCILNKP (205 aa)). A Ca(2+)-binding site is contributed by Asp106. 2 disulfide bridges follow: Cys130–Cys216 and Cys174–Cys181. His158 is a Zn(2+) binding site. Residue Glu159 is part of the active site. Zn(2+)-binding residues include His162 and His168. Ca(2+) contacts are provided by Cys216 and Asn219.

As to quaternary structure, monomer. Zn(2+) is required as a cofactor. Expressed by the venom gland.

Its subcellular location is the secreted. Its activity is regulated as follows. Inhibited by EDTA and EGTA. Inhibited by serum and antihemorrhagic factors Da2-I and Da2-II from D.albiventris. Not inhibited by PMSF or SBT-I. Functionally, snake venom zinc metalloprotease that is weakly hemorrhagic and has Aalpha, Bbeta fibrinogenolytic activities. Cleaves the Aalpha chain of fibrinogen first, followed by the Bbeta chain and shows no effect on the gamma chain. Has caseinolytic activity. Induces dose-dependent edema. The sequence is that of Snake venom metalloproteinase HF-1 from Bothrops marajoensis (Marajo lancehead).